The following is a 182-amino-acid chain: ATP synthase subunit delta (182 aa).

It belongs to the ATPase delta chain family. As to quaternary structure, F-type ATPases have 2 components, F(1) - the catalytic core - and F(0) - the membrane proton channel. F(1) has five subunits: alpha(3), beta(3), gamma(1), delta(1), epsilon(1). F(0) has three main subunits: a(1), b(2) and c(10-14). The alpha and beta chains form an alternating ring which encloses part of the gamma chain. F(1) is attached to F(0) by a central stalk formed by the gamma and epsilon chains, while a peripheral stalk is formed by the delta and b chains.

The protein localises to the cell membrane. Functionally, f(1)F(0) ATP synthase produces ATP from ADP in the presence of a proton or sodium gradient. F-type ATPases consist of two structural domains, F(1) containing the extramembraneous catalytic core and F(0) containing the membrane proton channel, linked together by a central stalk and a peripheral stalk. During catalysis, ATP synthesis in the catalytic domain of F(1) is coupled via a rotary mechanism of the central stalk subunits to proton translocation. Its function is as follows. This protein is part of the stalk that links CF(0) to CF(1). It either transmits conformational changes from CF(0) to CF(1) or is implicated in proton conduction. The chain is ATP synthase subunit delta from Lachnoclostridium phytofermentans (strain ATCC 700394 / DSM 18823 / ISDg) (Clostridium phytofermentans).